The primary structure comprises 2615 residues: Probable serine/threonine-protein kinase roco7 (2615 aa).

The segment covering 1–13 has biased composition (low complexity); that stretch reads MDGYSSLSSSGNS. Disordered regions lie at residues 1-35, 275-297, 533-623, and 946-998; these read MDGYSSLSSSGNSIAPPRPTNNSVGGGSNSNNYNQ, STPTIITSSSSTTTPTNNNNSNN, QNIN…GGLN, and SSSS…ISEQ. Composition is skewed to low complexity over residues 533-560, 567-614, and 946-996; these read QNINQNNNNNNNQNCNSNTSSPIISSRS, NSST…NNNN, and SSSS…SNIS. The COR domain maps to 1441-1631; sequence SVKEAYARNK…LCIWQNGMVL (191 aa). The 268-residue stretch at 1775–2042 folds into the Protein kinase domain; that stretch reads LKFGPQLGSG…ERLSTMQKTF (268 aa). ATP contacts are provided by residues 1781–1789 and lysine 1802; that span reads LGSGSYANV. The Proton acceptor role is filled by aspartate 1899. Disordered regions lie at residues 2061 to 2158 and 2176 to 2209; these read QINQ…SHSG and GIGSGGNQHQQNGSSTPHSNSQSNSGSSSVYESG. Low complexity-rich tracts occupy residues 2073-2158 and 2182-2209; these read SQAA…SHSG and NQHQQNGSSTPHSNSQSNSGSSSVYESG. 2 WD repeats span residues 2491–2527 and 2533–2574; these read GIIKKRLDGLASRVLSLLILDTYIIGACYDSTILVWD and RMVQ…TTYS.

This sequence belongs to the protein kinase superfamily. TKL Ser/Thr protein kinase family. ROCO subfamily.

It catalyses the reaction L-seryl-[protein] + ATP = O-phospho-L-seryl-[protein] + ADP + H(+). It carries out the reaction L-threonyl-[protein] + ATP = O-phospho-L-threonyl-[protein] + ADP + H(+). This Dictyostelium discoideum (Social amoeba) protein is Probable serine/threonine-protein kinase roco7 (roco7).